Reading from the N-terminus, the 108-residue chain is ATP-dependent Clp protease adapter protein ClpS (108 aa).

Basic and acidic residues predominate over residues 1–15 (MPHESSPDSQHEHGV). The interval 1–22 (MPHESSPDSQHEHGVAVEAARP) is disordered.

This sequence belongs to the ClpS family. Binds to the N-terminal domain of the chaperone ClpA.

Functionally, involved in the modulation of the specificity of the ClpAP-mediated ATP-dependent protein degradation. The polypeptide is ATP-dependent Clp protease adapter protein ClpS (Stenotrophomonas maltophilia (strain K279a)).